Reading from the N-terminus, the 609-residue chain is Zinc metalloproteinase-disintegrin-like VMP-III (609 aa).

Positions 1–20 (MIQVLLVTICLAAFPYQGSS) are cleaved as a signal peptide. Residues 21-189 (IILESGNVND…KKASQLVVTA (169 aa)) constitute a propeptide that is removed on maturation. Residues 198 to 393 (RFVELFLVVD…HNPECILNEP (196 aa)) form the Peptidase M12B domain. Residues Glu201 and Asp285 each contribute to the Ca(2+) site. 3 cysteine pairs are disulfide-bonded: Cys308–Cys388, Cys348–Cys372, and Cys350–Cys355. His333 lines the Zn(2+) pocket. Glu334 is a catalytic residue. Positions 337 and 343 each coordinate Zn(2+). Residue Asn371 is glycosylated (N-linked (GlcNAc...) asparagine). Residues Cys388, Asn391, Val403, Asn406, Leu408, Glu410, Glu413, and Asp416 each coordinate Ca(2+). A Disintegrin domain is found at 401–487 (PPVCGNELLE…ECPADVFHKN (87 aa)). Disulfide bonds link Cys404–Cys433, Cys415–Cys428, Cys417–Cys423, Cys427–Cys450, Cys441–Cys447, Cys446–Cys472, Cys459–Cys479, Cys466–Cys498, Cys491–Cys503, Cys510–Cys560, Cys525–Cys571, Cys538–Cys548, Cys555–Cys597, and Cys591–Cys602. The short motif at 465–467 (ECD) is the D/ECD-tripeptide element. Residues Asp467, Pro468, Glu470, Asp482, and Val483 each contribute to the Ca(2+) site.

This sequence belongs to the venom metalloproteinase (M12B) family. P-III subfamily. P-IIIa sub-subfamily. As to quaternary structure, monomer. Zn(2+) is required as a cofactor. In terms of tissue distribution, expressed by the venom gland.

It is found in the secreted. In terms of biological role, snake venom metalloproteinase that impairs hemostasis in the envenomed animal. The chain is Zinc metalloproteinase-disintegrin-like VMP-III from Crotalus viridis viridis (Prairie rattlesnake).